The sequence spans 401 residues: MELEPCSSSPERCKVCGDTGNGMHFGAFTCRACAAFFRRAASRKFLRKCENHLIFALKCKNCRLQRCYEAGMSSENFQFCRDLIGAKGAIPKLKVPKSFEQTVGRPYFVLQCDPEVLFLRRNIIDCVPLLEKAEKLIEFGSESPVFSKNRLLKLAQGLQQFQDAKSNQVKFVQKMGQKEIMSFFETDFLCATKWFTYLDEFQFLDKNQQLTLMQGIWHVWSRLHKLAVSAMGRRRGICDKNTVMVSHQNEFAVCDLNEIEVDMSWCTNFSNEQMRYFLDTSHDSYVYQVMDEMLGLKPNDVELSYMMCQLCLQYAGQRFQGEILEFCEKMLGFLADDLHSYYVKQLRMPNYAARLAKLMKINNRIKVDMLKMRQRQEISRVFDIWTIDFSHPEFIQDANAC.

Positions 10–79 form a DNA-binding region, nuclear receptor; the sequence is PERCKVCGDT…AGMSSENFQF (70 aa). 2 NR C4-type zinc fingers span residues 13-33 and 49-67; these read CKVC…CRAC and CENH…LQRC. Residues 132-398 form the NR LBD domain; that stretch reads KAEKLIEFGS…FSHPEFIQDA (267 aa).

Belongs to the nuclear hormone receptor family.

It localises to the nucleus. Its function is as follows. Orphan nuclear receptor. This Caenorhabditis elegans protein is Nuclear hormone receptor family member nhr-65 (nhr-65).